Consider the following 186-residue polypeptide: Peptidyl-tRNA hydrolase (186 aa).

Tyrosine 14 contributes to the tRNA binding site. The active-site Proton acceptor is histidine 19. Tyrosine 64, asparagine 66, and asparagine 112 together coordinate tRNA.

It belongs to the PTH family. As to quaternary structure, monomer.

It is found in the cytoplasm. The enzyme catalyses an N-acyl-L-alpha-aminoacyl-tRNA + H2O = an N-acyl-L-amino acid + a tRNA + H(+). Functionally, hydrolyzes ribosome-free peptidyl-tRNAs (with 1 or more amino acids incorporated), which drop off the ribosome during protein synthesis, or as a result of ribosome stalling. Its function is as follows. Catalyzes the release of premature peptidyl moieties from peptidyl-tRNA molecules trapped in stalled 50S ribosomal subunits, and thus maintains levels of free tRNAs and 50S ribosomes. The protein is Peptidyl-tRNA hydrolase of Mesoplasma florum (strain ATCC 33453 / NBRC 100688 / NCTC 11704 / L1) (Acholeplasma florum).